Reading from the N-terminus, the 430-residue chain is Cholecystokinin receptor type A (430 aa).

Residues 1-41 (MDVVDSLFVNGSNITSACELGFENETLFCLDRPRPSKEWQP) lie on the Extracellular side of the membrane. N10, N13, and N24 each carry an N-linked (GlcNAc...) asparagine glycan. An intrachain disulfide couples C18 to C29. A helical transmembrane segment spans residues 42–67 (AVQILLYSLIFLLSVLGNTLVITVLI). Over 68–77 (RNKRMRTVTN) the chain is Cytoplasmic. A helical transmembrane segment spans residues 78–104 (IFLLSLAVSDLMLCLFCMPFNLIPSLL). Residues 105-115 (KDFIFGSAVCK) are Extracellular-facing. The cysteines at positions 114 and 196 are disulfide-linked. A helical membrane pass occupies residues 116–137 (TTTYFMGTSVSVSTFNLVAISL). The Cytoplasmic segment spans residues 138-157 (ERYGAICKPLQSRVWQTKSH). The chain crosses the membrane as a helical span at residues 158 to 178 (ALKVIAATWCLSFTIMTPYPI). Residues 179-210 (YSNLVPFTKNNNQTGNMCRFLLPNDVMQQTWH) lie on the Extracellular side of the membrane. Residue N190 is glycosylated (N-linked (GlcNAc...) asparagine). The helical transmembrane segment at 211–234 (TFLLLILFLIPGIVMMVAYGLISL) threads the bilayer. Over 235–315 (ELYQGIKFDA…NLMAKKRVIR (81 aa)) the chain is Cytoplasmic. The chain crosses the membrane as a helical span at residues 316–336 (MLIVIVVLFFLCWMPIFSANA). Residues 337 to 351 (WRAYDTVSAERHLSG) are Extracellular-facing. Residues 352 to 375 (TPISFILLLSYTSSCVNPIIYCFM) traverse the membrane as a helical segment. Topologically, residues 376–430 (NKRFRLGFMATFPCCPNPGTPGVRGEMGEEEEGRTTGASLSRYSYSHMSTSAPPP) are cytoplasmic. C389 carries the S-palmitoyl cysteine lipid modification. Positions 396-430 (PGVRGEMGEEEEGRTTGASLSRYSYSHMSTSAPPP) are disordered. Residues 413–430 (ASLSRYSYSHMSTSAPPP) are compositionally biased toward polar residues.

Belongs to the G-protein coupled receptor 1 family.

It localises to the cell membrane. Receptor for cholecystokinin. Mediates pancreatic growth and enzyme secretion, smooth muscle contraction of the gall bladder and stomach. Has a 1000-fold higher affinity for CCK rather than for gastrin. It modulates feeding and dopamine-induced behavior in the central and peripheral nervous system. This receptor mediates its action by association with G proteins that activate a phosphatidylinositol-calcium second messenger system. This is Cholecystokinin receptor type A (CCKAR) from Cavia porcellus (Guinea pig).